A 349-amino-acid polypeptide reads, in one-letter code: Core protein VP7 (349 aa).

N287 carries N-linked (GlcNAc...) asparagine; by host glycosylation.

This sequence belongs to the orbivirus VP7 family. As to quaternary structure, homotrimer that assemble in a complex of 260 capsomers on an inner scaffold composed of VP3.

It is found in the virion. In terms of biological role, the VP7 protein is one of the five proteins (with VP1, VP3, VP4, and VP6) which form the inner capsid of the virus. This chain is Core protein VP7 (Segment-7), found in Antilocapra americana (Pronghorn).